Reading from the N-terminus, the 376-residue chain is Drebrin-like protein B (376 aa).

Positions 2–133 (SVNLSKNGAA…EPESIMEKVA (132 aa)) constitute an ADF-H domain. A coiled-coil region spans residues 175 to 231 (KENFWAKAEKDEEERRIEEHRRANVEKDRLERERKEREQREAEERERRFRERSKEID). Residues 202 to 242 (DRLERERKEREQREAEERERRFRERSKEIDGHRKQQEEVEK) show a composition bias toward basic and acidic residues. The segment at 202-288 (DRLERERKER…FTASQQEEEN (87 aa)) is disordered. Over residues 268–283 (ESGSVSAQPEQFTASQ) the composition is skewed to polar residues. In terms of domain architecture, SH3 spans 317–376 (DSGMCARALYDYQAADDTEISFDPDDVIIQIEMIDDGWWRGVAPSGHFGMFPANYVELLE).

This sequence belongs to the ABP1 family.

It is found in the cytoplasm. The protein localises to the cytoskeleton. The protein resides in the cell projection. Its subcellular location is the lamellipodium. It localises to the ruffle. It is found in the cell cortex. The protein localises to the cytosol. The protein resides in the synapse. Its subcellular location is the perikaryon. It localises to the neuron projection. It is found in the cell membrane. The protein localises to the cytoplasmic vesicle. The protein resides in the clathrin-coated vesicle membrane. Its subcellular location is the golgi apparatus membrane. It localises to the podosome. It is found in the early endosome. The protein localises to the dendrite. The protein resides in the postsynaptic density. In terms of biological role, adapter protein that binds F-actin and dynamin, and thereby plays a role in receptor-mediated endocytosis. Plays a role in the reorganization of the actin cytoskeleton, formation of cell projections, such as neurites, in neuron morphogenesis and synapse formation. Does not bind G-actin and promote actin polymerization by itself, but excerts its functions by interaction with other proteins. Required for the formation of organized podosome rosettes. In Xenopus laevis (African clawed frog), this protein is Drebrin-like protein B (dbnl-b).